Here is a 2000-residue protein sequence, read N- to C-terminus: Sodium channel protein type 3 subunit alpha (2000 aa).

Over 1–128 (MAQALLVPPG…KIAIKILVHS (128 aa)) the chain is Cytoplasmic. The interval 28-60 (RAAEEKAKKPKKEQDNDDENKPKPNSDLEAGKN) is disordered. A compositionally biased stretch (basic and acidic residues) spans 46 to 57 (ENKPKPNSDLEA). One copy of the I repeat lies at 110 to 455 (ILTPLNPVRK…QQMLEQLKKQ (346 aa)). Residues 129–146 (LFSMLIMCTILTNCVFMT) traverse the membrane as a helical segment. At 147 to 152 (LSNPPD) the chain is on the extracellular side. A helical transmembrane segment spans residues 153–174 (WTKNVEYTFTGIYTFESLIKIL). Residues 175–188 (ARGFCLEDFTFLRD) lie on the Cytoplasmic side of the membrane. Residues 189-206 (PWNWLDFSVIVMAYVTEF) form a helical membrane-spanning segment. The Extracellular portion of the chain corresponds to 207 to 213 (VSLGNVS). Asparagine 211 is a glycosylation site (N-linked (GlcNAc...) asparagine). Residues 214–235 (ALRTFRVLRALKTISVIPGLKT) form a helical membrane-spanning segment. At 236–249 (IVGALIQSVKKLSD) the chain is on the cytoplasmic side. Residues 250 to 269 (VMILTVFCLSVFALIGLQLF) form a helical membrane-spanning segment. Residues 270–369 (MGNLRNKCLQ…NYGYTSFDTF (100 aa)) are Extracellular-facing. Residues asparagine 290, asparagine 296, asparagine 302, asparagine 307, and asparagine 339 are each glycosylated (N-linked (GlcNAc...) asparagine). Residues 370–386 (SWAFLSLFRLMTQDYWE) constitute an intramembrane region (pore-forming). Topologically, residues 387-397 (NLYQLTLRAAG) are extracellular. A helical transmembrane segment spans residues 398 to 424 (KTYMIFFVLVIFLGSFYLVNLILAVVA). Over 425–761 (MAYEEQNQAT…LVNLIVMDPF (337 aa)) the chain is Cytoplasmic. A phosphoserine mark is found at serine 484, serine 485, and serine 486. Disordered regions lie at residues 493–528 (SKSA…KSES), 587–631 (VGSE…ASMS), and 662–681 (ALTS…ETEV). A compositionally biased stretch (basic residues) spans 500–509 (RNRRKKRRQR). Basic and acidic residues-rich tracts occupy residues 510–528 (EHLE…KSES) and 596–610 (DEHS…RRDS). Positions 662–678 (ALTSPTGQLPPEGTTTE) are enriched in polar residues. The stretch at 742-1014 (CCDAWLKVKH…QIAVGRMQKG (273 aa)) is one II repeat. A helical transmembrane segment spans residues 762–779 (VDLAITICIVLNTLFMAM). Residues 780–787 (EHYPMTEQ) are Extracellular-facing. Residues 788 to 812 (FSSVLTVGNLVFTGIFTAEMVLKII) traverse the membrane as a helical segment. Over 813–822 (AMDPYYYFQE) the chain is Cytoplasmic. The helical transmembrane segment at 823–842 (GWNIFDGIIVSLSLMELGLS) threads the bilayer. Residues 843–846 (NVEG) lie on the Extracellular side of the membrane. A helical membrane pass occupies residues 847–865 (LSVLRSFRLLRVFKLAKSW). The Cytoplasmic segment spans residues 866–883 (PTLNMLIKIIGNSVGALG). Residues 884 to 904 (NLTLVLAIIVFIFAVVGMQLF) traverse the membrane as a helical segment. Residues 905–929 (GKSYKECVCKINDDCTLPRWHMNDF) lie on the Extracellular side of the membrane. A disulfide bridge links cysteine 913 with cysteine 919. Positions 930–945 (FHSFLIVFRVLCGEWI) form an intramembrane region, pore-forming. Topologically, residues 946–956 (ETMWDCMEVAG) are extracellular. A disulfide bridge links cysteine 951 with cysteine 960. Residues 957–983 (QTMCLIVFMLVMVIGNLVVLNLFLALL) traverse the membrane as a helical segment. At 984-1205 (LSSFSSDNLA…RKTCYSIVEH (222 aa)) the chain is on the cytoplasmic side. Residues 1118–1162 (EEFSSESELEESKEKLNATSSSEGSTVDVVLPREGEQAETEPEED) form a disordered region. One copy of the III repeat lies at 1188 to 1499 (KGKIWWNLRK…KKYYNAMKKL (312 aa)). Residues 1206–1226 (NWFETFIVFMILLSSGALAFE) traverse the membrane as a helical segment. Topologically, residues 1227–1238 (DIYIEQRKTIKT) are extracellular. Residues 1239-1260 (MLEYADKVFTYIFILEMLLKWV) form a helical membrane-spanning segment. Residues 1261–1266 (AYGFQT) lie on the Cytoplasmic side of the membrane. The helical transmembrane segment at 1267–1292 (YFTNAWCWLDFLIVDVSLVSLVANAL) threads the bilayer. The Extracellular segment spans residues 1293 to 1301 (GYSELGAIK). The chain crosses the membrane as a helical span at residues 1302–1320 (SLRTLRALRPLRALSRFEG). At 1321-1333 (MRVVVNALVGAIP) the chain is on the cytoplasmic side. Residues 1334-1356 (SIMNVLLVCLIFWLIFSIMGVNL) form a helical membrane-spanning segment. Residues 1357 to 1402 (FAGKFYHCVNMTTGNMFDISDVNNLSDCQALGKQARWKNVKVNFDN) are Extracellular-facing. A disulfide bridge links cysteine 1364 with cysteine 1384. N-linked (GlcNAc...) asparagine glycans are attached at residues asparagine 1366 and asparagine 1380. Residues 1403 to 1419 (VGAGYLALLQVATFKGW) constitute an intramembrane region (pore-forming). Topologically, residues 1420 to 1442 (MDIMYAAVDSRDVKLQPVYEENL) are extracellular. The chain crosses the membrane as a helical span at residues 1443–1468 (YMYLYFVIFIIFGSFFTLNLFIGVII). Residues 1469–1526 (DNFNQQKKKFGGQDIFMTEEQKKYYNAMKKLGSKKPQKPIPRPANKFQGMVFDFVTRQ) lie on the Cytoplasmic side of the membrane. Serine 1501 is subject to Phosphoserine; by PKC. The stretch at 1508–1806 (IPRPANKFQG…WEKFDPDATQ (299 aa)) is one IV repeat. A helical membrane pass occupies residues 1527–1545 (VFDISIMILICLNMVTMMV). The Extracellular segment spans residues 1546–1553 (ETDDQGKY). The helical transmembrane segment at 1554–1577 (MTLVLSRINLVFIVLFTGEFVLKL) threads the bilayer. Residues 1578-1587 (VSLRHYYFTI) lie on the Cytoplasmic side of the membrane. A helical membrane pass occupies residues 1588–1605 (GWNIFDFVVVILSIVGMF). Residues 1606 to 1617 (LAEMIEKYFVSP) are Extracellular-facing. The chain crosses the membrane as a helical span at residues 1618 to 1640 (TLFRVIRLARIGRILRLIKGAKG). The Cytoplasmic segment spans residues 1641–1653 (IRTLLFALMMSLP). Residues 1654–1677 (ALFNIGLLLFLVMFIYAIFGMSNF) traverse the membrane as a helical segment. Topologically, residues 1678–1699 (AYVKKEAGIDDMFNFETFGNSM) are extracellular. Positions 1700–1712 (ICLFQITTSAGWD) form an intramembrane region, pore-forming. Over 1713–1744 (GLLAPILNSAPPDCDPDTIHPGSSVKGDCGNP) the chain is Extracellular. Residues 1745 to 1770 (SVGIFFFVSYIIISFLVVVNMYIAVI) form a helical membrane-spanning segment. Residues 1771–2000 (LENFSVATEE…KGKEVRENQK (230 aa)) are Cytoplasmic-facing. One can recognise an IQ domain in the interval 1900 to 1929 (EEVSAAIIQRNFRCYLLKQRLKNISSNYNK). Residues 1949–2000 (LNGNSTPEKTDGSSSTTSPPSYDSVTKPDKEKFEKDKPEKESKGKEVRENQK) form a disordered region. Over residues 1974–2000 (TKPDKEKFEKDKPEKESKGKEVRENQK) the composition is skewed to basic and acidic residues.

The protein belongs to the sodium channel (TC 1.A.1.10) family. Nav1.3/SCN3A subfamily. As to quaternary structure, heterooligomer of an alpha subunit, SCN3A, and 1 to 3 regulatory beta subunits including SCN1B and SCN2B; disulfide-linked with some beta subunits like SCN2B. Interacts with NEDD4L; could regulate expression of SCN3A at the plasma membrane through ubiquitination-regulated endocytosis. Interacts with the conotoxin GVIIJ. Post-translationally, may be ubiquitinated by NEDD4L; which would promote its endocytosis. Phosphorylation at Ser-1501 by PKC in a highly conserved cytoplasmic loop slows inactivation of the sodium channel and reduces peak sodium currents. Expressed in enterochromaffin cells in both colon and small bowel (at protein level).

The protein resides in the cell membrane. Its subcellular location is the basal cell membrane. The catalysed reaction is Na(+)(in) = Na(+)(out). Functionally, pore-forming subunit of Nav1.3, a voltage-gated sodium (Nav) channel that directly mediates the depolarizing phase of action potentials in excitable membranes. Navs, also called VGSCs (voltage-gated sodium channels) or VDSCs (voltage-dependent sodium channels), operate by switching between closed and open conformations depending on the voltage difference across the membrane. In the open conformation they allow Na(+) ions to selectively pass through the pore, along their electrochemical gradient. The influx of Na+ ions provokes membrane depolarization, initiating the propagation of electrical signals throughout cells and tissues. In some secretory cell types, it also participates in cell excitability through membrane depolarization and regulates cells responsiveness to stimuli triggering secretion. For instance, it controls the release of serotonin/5-hydroxytryptamine by enterochromaffin cells and is required for both glucagon- and glucose-induced insulin secretion in pancreatic endocrine cells. This chain is Sodium channel protein type 3 subunit alpha, found in Homo sapiens (Human).